Consider the following 353-residue polypeptide: Photosystem II D2 protein (353 aa).

Residue Thr-2 is modified to N-acetylthreonine. Position 2 is a phosphothreonine (Thr-2). Residues 41-61 traverse the membrane as a helical segment; that stretch reads CAYFAVGGWFTGTTFVTSWYT. His-118 serves as a coordination point for chlorophyll a. The chain crosses the membrane as a helical span at residues 125–141; the sequence is GFMLRQFELARSVQLRP. Pheophytin a contacts are provided by Gln-130 and Asn-143. A helical membrane pass occupies residues 153–166; sequence VFVSVFLIYPLGQS. Residue His-198 participates in chlorophyll a binding. Residues 208-228 form a helical membrane-spanning segment; the sequence is AALLCAIHGATVENTLFEDGD. Residues His-215 and Phe-262 each contribute to the a plastoquinone site. His-215 is a binding site for Fe cation. Residue His-269 participates in Fe cation binding. A helical transmembrane segment spans residues 279-295; it reads GLWMSALGVVGLALNLR.

The protein belongs to the reaction center PufL/M/PsbA/D family. PSII is composed of 1 copy each of membrane proteins PsbA, PsbB, PsbC, PsbD, PsbE, PsbF, PsbH, PsbI, PsbJ, PsbK, PsbL, PsbM, PsbT, PsbX, PsbY, PsbZ, Psb30/Ycf12, at least 3 peripheral proteins of the oxygen-evolving complex and a large number of cofactors. It forms dimeric complexes. Requires The D1/D2 heterodimer binds P680, chlorophylls that are the primary electron donor of PSII, and subsequent electron acceptors. It shares a non-heme iron and each subunit binds pheophytin, quinone, additional chlorophylls, carotenoids and lipids. There is also a Cl(-1) ion associated with D1 and D2, which is required for oxygen evolution. The PSII complex binds additional chlorophylls, carotenoids and specific lipids. as cofactor.

It localises to the plastid. The protein localises to the chloroplast thylakoid membrane. The enzyme catalyses 2 a plastoquinone + 4 hnu + 2 H2O = 2 a plastoquinol + O2. Photosystem II (PSII) is a light-driven water:plastoquinone oxidoreductase that uses light energy to abstract electrons from H(2)O, generating O(2) and a proton gradient subsequently used for ATP formation. It consists of a core antenna complex that captures photons, and an electron transfer chain that converts photonic excitation into a charge separation. The D1/D2 (PsbA/PsbD) reaction center heterodimer binds P680, the primary electron donor of PSII as well as several subsequent electron acceptors. D2 is needed for assembly of a stable PSII complex. This Atropa belladonna (Belladonna) protein is Photosystem II D2 protein.